A 162-amino-acid polypeptide reads, in one-letter code: Phosphopantetheine adenylyltransferase (162 aa).

Ser-9 contributes to the substrate binding site. ATP is bound by residues 9–10 (SF) and His-17. Lys-41, Leu-73, and Lys-87 together coordinate substrate. Residues 88–90 (GLR), Glu-98, and 123–129 (YAHLSSS) each bind ATP.

It belongs to the bacterial CoaD family. Homohexamer. Requires Mg(2+) as cofactor.

Its subcellular location is the cytoplasm. The catalysed reaction is (R)-4'-phosphopantetheine + ATP + H(+) = 3'-dephospho-CoA + diphosphate. It participates in cofactor biosynthesis; coenzyme A biosynthesis; CoA from (R)-pantothenate: step 4/5. Functionally, reversibly transfers an adenylyl group from ATP to 4'-phosphopantetheine, yielding dephospho-CoA (dPCoA) and pyrophosphate. The chain is Phosphopantetheine adenylyltransferase from Symbiobacterium thermophilum (strain DSM 24528 / JCM 14929 / IAM 14863 / T).